Reading from the N-terminus, the 187-residue chain is MAIGMSELKKGLKIELGGVPYRIVEYQHVKPGKGAAFVRAKIKSFLDGKVIEKTFHAGDKCEEPNLVEKTMQYLYHDGDTYQFMDIESYEQIALNDSQVGEASKWMLDGMQVQVLLHNDKAISVDVPQVVALKIVETAPNFKGDTSSASKKPATLETGAVVQVPFHVLEGETIKVNTETEEYLEKVK.

The protein belongs to the elongation factor P family.

Its subcellular location is the cytoplasm. It functions in the pathway protein biosynthesis; polypeptide chain elongation. Its function is as follows. Involved in peptide bond synthesis. Stimulates efficient translation and peptide-bond synthesis on native or reconstituted 70S ribosomes in vitro. Probably functions indirectly by altering the affinity of the ribosome for aminoacyl-tRNA, thus increasing their reactivity as acceptors for peptidyl transferase. The protein is Elongation factor P (efp) of Helicobacter pylori (strain J99 / ATCC 700824) (Campylobacter pylori J99).